We begin with the raw amino-acid sequence, 1518 residues long: Probable serine/threonine-protein kinase HSL1 (1518 aa).

Disordered regions lie at residues 1-43 and 55-83; these read MTGH…GHLE and RLSQPDSTVSVATKSSKRKSRDTVGPWKL. The span at 55–68 shows a compositional bias: polar residues; the sequence is RLSQPDSTVSVATK. Residues 81 to 369 enclose the Protein kinase domain; it reads WKLGKTLGKG…TQEILKHPLI (289 aa). ATP is bound by residues 87–95 and Lys-110; that span reads LGKGSSGRV. The Proton acceptor role is filled by Asp-239. A disordered region spans residues 467-502; the sequence is LSSSSENKKSATESSVNEPRIEYASKTANNTGLRSE. Over residues 492 to 501 the composition is skewed to polar residues; the sequence is KTANNTGLRS. Ser-511 bears the Phosphoserine mark. Residues 599–611 are compositionally biased toward low complexity; it reads SNSRLSLSASTSR. The tract at residues 599–651 is disordered; the sequence is SNSRLSLSASTSRETVHDNEMPLPQLPKSPSRYSLSRRAIHASPSTKSIHKSL. Residues Ser-629 and Ser-685 each carry the phosphoserine modification. Positions 741–783 are disordered; sequence EEEDNEKERDTQRQRQNDTKSSADTFTISGVSTNKENEGPEYP. Positions 746 to 758 are enriched in basic and acidic residues; sequence EKERDTQRQRQND. Residues 759-774 are compositionally biased toward polar residues; that stretch reads TKSSADTFTISGVSTN. 2 positions are modified to phosphoserine: Ser-837 and Ser-866. Over residues 856-876 the composition is skewed to basic and acidic residues; sequence EQLQKKNDRPSPLKPIQHQEL. Disordered stretches follow at residues 856–898, 1005–1030, 1150–1170, and 1220–1243; these read EQLQ…RRNI, DDKHLSVPQNQSRSVAMSHPLRKQSA, APSDEGSLNTSSSESDSRASV, and SPENPSNTHMQKRFSSTRGSRDSN. Phosphoserine is present on Ser-1220. Over residues 1222 to 1243 the composition is skewed to polar residues; it reads ENPSNTHMQKRFSSTRGSRDSN. A Phosphoserine modification is found at Ser-1250. Residues 1259–1291 are disordered; the sequence is EEDQDGHTSQADILESSMSYSKRRPSEESVNPK. Over residues 1265 to 1278 the composition is skewed to polar residues; sequence HTSQADILESSMSY. Residues Ser-1284, Ser-1287, and Ser-1325 each carry the phosphoserine modification.

The protein belongs to the protein kinase superfamily. CAMK Ser/Thr protein kinase family. NIM1 subfamily.

It is found in the bud neck. It catalyses the reaction L-seryl-[protein] + ATP = O-phospho-L-seryl-[protein] + ADP + H(+). It carries out the reaction L-threonyl-[protein] + ATP = O-phospho-L-threonyl-[protein] + ADP + H(+). The protein is Probable serine/threonine-protein kinase HSL1 (HSL1) of Saccharomyces cerevisiae (strain ATCC 204508 / S288c) (Baker's yeast).